Here is a 735-residue protein sequence, read N- to C-terminus: MATKLFPKFSQGLAQDPTTRRIWFGLAVAHDFESHDGMTEENLYQKIFASHFGQLAIIFLWTSGNLFHVAWQGNFEQWGADPIHVRPIAHAIWDPHFGQPAVEAFTRGGASGPVNISTSGLYQWWYTIGMRTNQDLYVGSVFLALVSAIFLFAGWLHLQPSFQPSLSWFKDAESRLNHHLSGLFGVSSLAWTGHLVHVAIPESRGKHVGWDNFLTQLPHPQGLTPFWTGNWAAYAQNPDSASHIFGTSDGAGEAILTFLGGFHPQTQSLWLTDMAHHHLAIAVLFIVAGHMYRTNFGIGHRMSAILDAHVAPSGRLGAGHKGLFETVNNSLHFQLGLALASVGTICSLVAQHMYSLPPYAFLANDFTTQAALYTHHQYIAGFIMCGAFAHGAIFWIRDYDPEQNKGNVLSRMLDHKEAIISHLSWVSLFLGFHTLGLYVHNDVMLAFGTPEKQILIEPVFAQWIQAAHGKAFYGFDLLLSSSSSSASSASQTLWLPGWLDAINNNQNSLFLTIGPGDFLVHHAIALGLHTTTLILVKGALDARGSKLMPDKKDFGYSFPCDGPGRGGTCDISAYDAFYLAVFWMLNTIGWVTFYWHWKHLTLWQGNVSQFDESSTYLMGWLRDYLWLNSSQLINGYNPFGMNSLSVWAWMFLAGHLVYATGFMFLISWRGYWQELIETLVWAHEKTPLANLVYWKDKPVALSIVQARLVGLAHFSVGYVFTYAAFVIASTSGKFG.

Helical transmembrane passes span 47-70 (IFAS…FHVA), 136-159 (LYVG…LHLQ), 176-200 (LNHH…HVAI), 274-292 (MAHH…GHMY), 331-354 (LHFQ…QHMY), 370-396 (AALY…IFWI), 418-440 (AIIS…LYVH), and 518-536 (FLVH…LILV). Residues cysteine 560 and cysteine 569 each coordinate [4Fe-4S] cluster. 2 helical membrane-spanning segments follow: residues 576–597 (AFYL…YWHW) and 644–666 (LSVW…MFLI). Chlorophyll a contacts are provided by histidine 655, methionine 663, and tyrosine 671. Phylloquinone is bound at residue tryptophan 672. Residues 708–728 (LVGLAHFSVGYVFTYAAFVIA) form a helical membrane-spanning segment.

Belongs to the PsaA/PsaB family. As to quaternary structure, the PsaA/B heterodimer binds the P700 chlorophyll special pair and subsequent electron acceptors. PSI consists of a core antenna complex that captures photons, and an electron transfer chain that converts photonic excitation into a charge separation. The eukaryotic PSI reaction center is composed of at least 11 subunits. It depends on P700 is a chlorophyll a/chlorophyll a' dimer, A0 is one or more chlorophyll a, A1 is one or both phylloquinones and FX is a shared 4Fe-4S iron-sulfur center. as a cofactor.

It localises to the plastid. Its subcellular location is the chloroplast thylakoid membrane. The catalysed reaction is reduced [plastocyanin] + hnu + oxidized [2Fe-2S]-[ferredoxin] = oxidized [plastocyanin] + reduced [2Fe-2S]-[ferredoxin]. Its function is as follows. PsaA and PsaB bind P700, the primary electron donor of photosystem I (PSI), as well as the electron acceptors A0, A1 and FX. PSI is a plastocyanin/cytochrome c6-ferredoxin oxidoreductase, converting photonic excitation into a charge separation, which transfers an electron from the donor P700 chlorophyll pair to the spectroscopically characterized acceptors A0, A1, FX, FA and FB in turn. Oxidized P700 is reduced on the lumenal side of the thylakoid membrane by plastocyanin or cytochrome c6. The polypeptide is Photosystem I P700 chlorophyll a apoprotein A2 (Tetradesmus obliquus (Green alga)).